The chain runs to 660 residues: MKEKFELVSAYDPAGDQPNAINEITKKVLAGQRHQTLLGATGTGKTFTMSNVVKEINRPTLVIAHNKTLAGQLYSEFKEFFPNNAVEYFVSYYDYYQPEAYVPSTDTFIEKDASINDEIDKLRHSATSALFERQDVLIVASVSCIYGLGNPEEYKSQVLSLRMGMEKDRDQLLRDLVEVQYARNDINFQRGTFRVRGDSVEIIPASHEEYCIRVEFFGDEIDRIREVDALTGEIIGDREHVAIFPASHFVTREEKMKIAIQNIEKELEEQLKEMRDNGKLLEAQRLEQRTNYDLEMMREMGFCSGIENYSRHLTLRGPGAVPYTLLDFFPEDFLVIIDESHVTLPQIRGMFNGDQARKQVLVDHGFRLPSAMDNRPLRFQEFEDKTKQLVYVSATPGPYELEHSPEMTEQIIRPTGLLDPKVEVRPIEGQIDNLIEEIRIRMEKNERVLITTLTKKMSEDLTDYLKEIGMKVAYLHSEIKTLERIEVIRDLRVGKFDVLVGINLLREGLDIPEVSLVSILDADKEGFLRSERSLIQTMGRAARNENGKVIMYADKMTDSMKKAIDETNRRRTIQTEYNEQHGITPKTIRKEVRDVIKATTAAEETESYEPKTKQINKMTKKEREKVIEQMENEMKQAAKDLDFEKAAELRDVILELKAEG.

The Helicase ATP-binding domain maps to 26–414; it reads KKVLAGQRHQ…PEMTEQIIRP (389 aa). 39-46 is an ATP binding site; sequence GATGTGKT. The Beta-hairpin motif lies at 92–115; sequence YYDYYQPEAYVPSTDTFIEKDASI. Residues 430 to 596 form the Helicase C-terminal domain; that stretch reads QIDNLIEEIR…TIRKEVRDVI (167 aa). The UVR domain occupies 624-659; sequence EKVIEQMENEMKQAAKDLDFEKAAELRDVILELKAE.

It belongs to the UvrB family. Forms a heterotetramer with UvrA during the search for lesions. Interacts with UvrC in an incision complex.

The protein localises to the cytoplasm. In terms of biological role, the UvrABC repair system catalyzes the recognition and processing of DNA lesions. A damage recognition complex composed of 2 UvrA and 2 UvrB subunits scans DNA for abnormalities. Upon binding of the UvrA(2)B(2) complex to a putative damaged site, the DNA wraps around one UvrB monomer. DNA wrap is dependent on ATP binding by UvrB and probably causes local melting of the DNA helix, facilitating insertion of UvrB beta-hairpin between the DNA strands. Then UvrB probes one DNA strand for the presence of a lesion. If a lesion is found the UvrA subunits dissociate and the UvrB-DNA preincision complex is formed. This complex is subsequently bound by UvrC and the second UvrB is released. If no lesion is found, the DNA wraps around the other UvrB subunit that will check the other stand for damage. The sequence is that of UvrABC system protein B from Oceanobacillus iheyensis (strain DSM 14371 / CIP 107618 / JCM 11309 / KCTC 3954 / HTE831).